The primary structure comprises 93 residues: Integration host factor subunit beta (93 aa).

This sequence belongs to the bacterial histone-like protein family. Heterodimer of an alpha and a beta chain.

Its function is as follows. This protein is one of the two subunits of integration host factor, a specific DNA-binding protein that functions in genetic recombination as well as in transcriptional and translational control. This chain is Integration host factor subunit beta (ihfB), found in Mannheimia haemolytica (Pasteurella haemolytica).